We begin with the raw amino-acid sequence, 235 residues long: Secretory carrier-associated membrane protein 5A (235 aa).

Residues 1 to 39 lie on the Cytoplasmic side of the membrane; the sequence is MSDKPNNFPPLPRFIPLKPCFYQDFDTDIPDLHRTTAKR. A helical transmembrane segment spans residues 40–60; that stretch reads LYYLWMLNSITLGVNLIGCLA. Topologically, residues 61-67 are extracellular; that stretch reads WLIGGGS. Residues 68–88 traverse the membrane as a helical segment; it reads ATNFGLAFLWLILFTPCSYVC. The Cytoplasmic segment spans residues 89-102; it reads WFRPIYKAFKTDSS. Residues 103-125 form a helical membrane-spanning segment; the sequence is FNFMAFFFTFTAQLVISIIQAVG. The Extracellular segment spans residues 126 to 148; sequence IPGWGVCGWIASISFFGTNVGSA. Residues 149 to 169 form a helical membrane-spanning segment; sequence VVMLIPTIMFTAVAVLSFVAL. Residues 170–235 are Cytoplasmic-facing; it reads TKVHRFYRGA…TPNYGYSNEM (66 aa).

It belongs to the SCAMP family. SCAMP5 subfamily.

It is found in the cell membrane. The protein localises to the golgi apparatus membrane. It localises to the golgi apparatus. The protein resides in the trans-Golgi network membrane. Its subcellular location is the recycling endosome membrane. It is found in the cytoplasmic vesicle. The protein localises to the secretory vesicle. It localises to the synaptic vesicle membrane. Required for the calcium-dependent exocytosis of signal sequence-containing cytokines. Probably acts in cooperation with the SNARE machinery. The chain is Secretory carrier-associated membrane protein 5A (scamp5-a) from Xenopus laevis (African clawed frog).